We begin with the raw amino-acid sequence, 152 residues long: MADSERLTAPGCWAACTSFSRTRKGFLLFAEIILCLVILICFSTSTSGYSFLSVIEMIFAAIFFVVYMCDLHTKIQIINWPWSDFFRTLVAAILYLITSIVVLVERGNGSKIAAGALGLCAAGLFGYDAYITFPLRQQRHTAAPTDPADGPV.

The 119-residue stretch at 19–137 (FSRTRKGFLL…DAYITFPLRQ (119 aa)) folds into the MARVEL domain. Transmembrane regions (helical) follow at residues 25 to 45 (GFLL…FSTS), 48 to 68 (GYSF…VVYM), and 85 to 105 (FFRT…VLVE). Asparagine 108 carries an N-linked (GlcNAc...) asparagine glycan. Residues 112–132 (IAAGALGLCAAGLFGYDAYIT) traverse the membrane as a helical segment.

It is found in the membrane. Functionally, may play a role in cell differentiation in the intestinal epithelium. This Bos taurus (Bovine) protein is Proteolipid protein 2 (PLP2).